A 356-amino-acid chain; its full sequence is Activating signal cointegrator 1 complex subunit 1 (356 aa).

Positions 1–52 (MDVLRPQIVTFDGRNYRKNPIQEKQYQHEEDEDFYPDSMEYSDEPCGAYEVA) are required for interaction with ASCC3. The region spanning 57-119 (GFRATVSAPS…NGVVSARTRI (63 aa)) is the KH domain.

In terms of assembly, identified in the ASCC complex that contains ASCC1, ASCC2 and ASCC3. Interacts directly with ASCC3. The ASCC complex interacts with ALKBH3. Part of the ASC-1 complex, that contains TRIP4, ASCC1, ASCC2 and ASCC3. Interacts with CSRP1. Interacts with ZCCHC4. Expressed in the spinal cord, brain, paraspinal ganglia, thyroid, and submandibular glands.

The protein resides in the nucleus. Its subcellular location is the nucleus speckle. Its function is as follows. Plays a role in DNA damage repair as component of the ASCC complex. Part of the ASC-1 complex that enhances NF-kappa-B, SRF and AP1 transactivation. In cells responding to gastrin-activated paracrine signals, it is involved in the induction of SERPINB2 expression by gastrin. May also play a role in the development of neuromuscular junction. This is Activating signal cointegrator 1 complex subunit 1 (Ascc1) from Mus musculus (Mouse).